A 3507-amino-acid polypeptide reads, in one-letter code: Dynein axonemal heavy chain 14 (3507 aa).

The tract at residues 91–126 (PHLPGTQDPLRRVRDPTPIVASSPGRRRGSWSGGYG) is disordered. A coiled-coil region spans residues 354 to 381 (DEFCEEQLQQATQALKQLEDIRNKAISE). The GPAGTGKT motif motif lies at 1164–1171 (GPAGTGKT). ATP contacts are provided by residues 1164 to 1171 (GPAGTGKT) and 1427 to 1434 (GPTGGGKT). N-linked (GlcNAc...) asparagine glycosylation is present at Asn1818.

This sequence belongs to the dynein heavy chain family. In terms of assembly, consists of at least two heavy chains and a number of intermediate and light chains.

The protein localises to the cytoplasm. It is found in the cytoskeleton. The protein resides in the cilium axoneme. Force generating protein of respiratory cilia. Produces force towards the minus ends of microtubules. Dynein has ATPase activity; the force-producing power stroke is thought to occur on release of ADP. Involved in sperm motility; implicated in sperm flagellar assembly. This Homo sapiens (Human) protein is Dynein axonemal heavy chain 14 (DNAH14).